The following is a 220-amino-acid chain: MICLPVVEDSVEKAIKTAEKYLEIADIVEFRIDMLKEVSEEDIEKFAKYPCIITVRADWEGGYWKGNNEERLNLIKKAIECNAKFVDIELREEKNKELVKFRDEIGSKTKIIISYHDFEKTPSKEKLVEIVEKALSIGDIAKFATMANSKEDVLNILEVINKYPGKIIGIGMGEKGKLTRILGVYFGSILTFASYKGKSSAPGQVDIDTLKEIWRLMDLK.

3-dehydroquinate-binding positions include 29 to 31 and Arg-56; that span reads EFR. The active-site Proton donor/acceptor is the His-116. Lys-142 (schiff-base intermediate with substrate) is an active-site residue. Residues Arg-180, Ser-200, and Gln-204 each contribute to the 3-dehydroquinate site.

Belongs to the type-I 3-dehydroquinase family. Homodimer.

It carries out the reaction 3-dehydroquinate = 3-dehydroshikimate + H2O. It functions in the pathway metabolic intermediate biosynthesis; chorismate biosynthesis; chorismate from D-erythrose 4-phosphate and phosphoenolpyruvate: step 3/7. Involved in the third step of the chorismate pathway, which leads to the biosynthesis of aromatic amino acids. Catalyzes the cis-dehydration of 3-dehydroquinate (DHQ) and introduces the first double bond of the aromatic ring to yield 3-dehydroshikimate. The sequence is that of 3-dehydroquinate dehydratase from Methanocaldococcus jannaschii (strain ATCC 43067 / DSM 2661 / JAL-1 / JCM 10045 / NBRC 100440) (Methanococcus jannaschii).